Reading from the N-terminus, the 209-residue chain is uncharacterized protein (209 aa).

The stretch at 41 to 76 (NVENLCLIRNKLKTDIENLLENKIDVENKLLVLRNQ) forms a coiled coil.

This is an uncharacterized protein from Acanthamoeba polyphaga (Amoeba).